A 721-amino-acid polypeptide reads, in one-letter code: mRNA (2'-O-methyladenosine-N(6)-)-methyltransferase (721 aa).

Polar residues-rich tracts occupy residues 1–10 (MTSENHTTIK) and 19–36 (PTGS…TSKP). Residues 1-37 (MTSENHTTIKADSALVMSPTGSTSQAAPFSPSTSKPI) are disordered. In terms of domain architecture, WW spans 43-77 (ELIQAGWSKCWSKRENRPYYFNRFTNQSLWEMPVL). A disordered region spans residues 93 to 170 (PASGEANADA…KQGQASTPAP (78 aa)). Low complexity predominate over residues 132 to 148 (IPATPTTPTVPISPSTP). Substrate is bound by residues Arg239 and Arg269. Residue 558–561 (NPPF) participates in S-adenosyl-L-methionine binding. Substrate-binding positions include Glu563 and 593-597 (WRDPP). An S-adenosyl-L-methionine-binding site is contributed by 619–621 (FEH). Low complexity predominate over residues 675 to 686 (SGRSLPSPGPSS). The tract at residues 675–721 (SGRSLPSPGPSSTNTGEKDSKPAPERTAPSQDNSSPVDKTAQDTTNT) is disordered. The span at 702-721 (APSQDNSSPVDKTAQDTTNT) shows a compositional bias: polar residues.

Belongs to the CAPAM family.

The protein resides in the nucleus. The enzyme catalyses a 5'-end (N(7)-methyl 5'-triphosphoguanosine)-(2'-O-methyladenosine) in mRNA + S-adenosyl-L-methionine = a 5'-end (N(7)-methyl 5'-triphosphoguanosine)-(N(6),2'-O-dimethyladenosine) in mRNA + S-adenosyl-L-homocysteine + H(+). Cap-specific adenosine methyltransferase activity is inhibited by zinc. In terms of biological role, cap-specific adenosine methyltransferase that catalyzes formation of N(6),2'-O-dimethyladenosine cap (m6A(m)) by methylating the adenosine at the second transcribed position of capped mRNAs. This chain is mRNA (2'-O-methyladenosine-N(6)-)-methyltransferase (pcif1), found in Danio rerio (Zebrafish).